Consider the following 114-residue polypeptide: Ribosome-binding factor A (114 aa).

The protein belongs to the RbfA family. Monomer. Binds 30S ribosomal subunits, but not 50S ribosomal subunits or 70S ribosomes.

It localises to the cytoplasm. Functionally, one of several proteins that assist in the late maturation steps of the functional core of the 30S ribosomal subunit. Associates with free 30S ribosomal subunits (but not with 30S subunits that are part of 70S ribosomes or polysomes). Required for efficient processing of 16S rRNA. May interact with the 5'-terminal helix region of 16S rRNA. This Macrococcus caseolyticus (strain JCSC5402) (Macrococcoides caseolyticum) protein is Ribosome-binding factor A.